The primary structure comprises 335 residues: Methionyl-tRNA formyltransferase (335 aa).

Position 122 to 125 (122 to 125) interacts with (6S)-5,6,7,8-tetrahydrofolate; that stretch reads SLLP. A disordered region spans residues 203-222; sequence DSHGPLGEPQDPAKVSKAPR.

It belongs to the Fmt family.

The catalysed reaction is L-methionyl-tRNA(fMet) + (6R)-10-formyltetrahydrofolate = N-formyl-L-methionyl-tRNA(fMet) + (6S)-5,6,7,8-tetrahydrofolate + H(+). Its function is as follows. Attaches a formyl group to the free amino group of methionyl-tRNA(fMet). The formyl group appears to play a dual role in the initiator identity of N-formylmethionyl-tRNA by promoting its recognition by IF2 and preventing the misappropriation of this tRNA by the elongation apparatus. This chain is Methionyl-tRNA formyltransferase, found in Rhodopirellula baltica (strain DSM 10527 / NCIMB 13988 / SH1).